Here is a 132-residue protein sequence, read N- to C-terminus: Large ribosomal subunit protein bL19 (132 aa).

Belongs to the bacterial ribosomal protein bL19 family.

Its function is as follows. This protein is located at the 30S-50S ribosomal subunit interface and may play a role in the structure and function of the aminoacyl-tRNA binding site. The chain is Large ribosomal subunit protein bL19 from Maricaulis maris (strain MCS10) (Caulobacter maris).